The sequence spans 338 residues: MTARDFKNYLEPLREGKNLLGFSGGLDSTCLFHLLVGENIAFDIALVDYSTQKQRLEIIQHAQKLAQTHHKKCYIHYAPKIARNFEMQARKVRYDFFETLIKEHSYKHLILAHHLNDRLEWFLMQLSKGAGLNTLLSFQAYEKRESYAIVRPLLYTPKDTLKTLAKDQKFFEDDSNSSLKFKRNCFRKHYANALMQHYSKGIIQSFKFLDKEKERLYPLIPVSQMHGITFFKHSHNALFMVDKILKKKGYVLSFLQKEEIKHHFFSLEIAQKFIIEKDKEHVFIAFKPQKTLSMPKDFKDRARRLDIPKRLRPVLYAEFLKQPTHDFLTRFKQSLMDL.

An ATP-binding site is contributed by Ser23–Ser28.

The protein belongs to the tRNA(Ile)-lysidine synthase family.

It localises to the cytoplasm. The catalysed reaction is cytidine(34) in tRNA(Ile2) + L-lysine + ATP = lysidine(34) in tRNA(Ile2) + AMP + diphosphate + H(+). Ligates lysine onto the cytidine present at position 34 of the AUA codon-specific tRNA(Ile) that contains the anticodon CAU, in an ATP-dependent manner. Cytidine is converted to lysidine, thus changing the amino acid specificity of the tRNA from methionine to isoleucine. This chain is tRNA(Ile)-lysidine synthase, found in Helicobacter pylori (strain J99 / ATCC 700824) (Campylobacter pylori J99).